A 318-amino-acid chain; its full sequence is Ribonuclease Z (318 aa).

Zn(2+) is bound by residues H62, H64, D66, H67, H139, D210, and H268. The active-site Proton acceptor is D66.

The protein belongs to the RNase Z family. In terms of assembly, homodimer. Zn(2+) is required as a cofactor.

It carries out the reaction Endonucleolytic cleavage of RNA, removing extra 3' nucleotides from tRNA precursor, generating 3' termini of tRNAs. A 3'-hydroxy group is left at the tRNA terminus and a 5'-phosphoryl group is left at the trailer molecule.. Zinc phosphodiesterase, which displays some tRNA 3'-processing endonuclease activity. Probably involved in tRNA maturation, by removing a 3'-trailer from precursor tRNA. The chain is Ribonuclease Z from Gloeothece citriformis (strain PCC 7424) (Cyanothece sp. (strain PCC 7424)).